The sequence spans 78 residues: MSEVEKKVIDLVVDKLNVEASEVTREASFSNDLGADSLDTVELMMNFEKEFNMSIPDDQAQEIKTVGDAIDYIEKNLK.

The Carrier domain maps to 1 to 77; that stretch reads MSEVEKKVID…DAIDYIEKNL (77 aa). Residue S37 is modified to O-(pantetheine 4'-phosphoryl)serine.

The protein belongs to the acyl carrier protein (ACP) family. Post-translationally, 4'-phosphopantetheine is transferred from CoA to a specific serine of apo-ACP by AcpS. This modification is essential for activity because fatty acids are bound in thioester linkage to the sulfhydryl of the prosthetic group.

The protein localises to the cytoplasm. It participates in lipid metabolism; fatty acid biosynthesis. Carrier of the growing fatty acid chain in fatty acid biosynthesis. The protein is Acyl carrier protein of Porphyromonas gingivalis (strain ATCC 33277 / DSM 20709 / CIP 103683 / JCM 12257 / NCTC 11834 / 2561).